The chain runs to 494 residues: Guanosine-5'-triphosphate,3'-diphosphate pyrophosphatase (494 aa).

It belongs to the GppA/Ppx family. GppA subfamily.

It carries out the reaction guanosine 3'-diphosphate 5'-triphosphate + H2O = guanosine 3',5'-bis(diphosphate) + phosphate + H(+). It functions in the pathway purine metabolism; ppGpp biosynthesis; ppGpp from GTP: step 2/2. Catalyzes the conversion of pppGpp to ppGpp. Guanosine pentaphosphate (pppGpp) is a cytoplasmic signaling molecule which together with ppGpp controls the 'stringent response', an adaptive process that allows bacteria to respond to amino acid starvation, resulting in the coordinated regulation of numerous cellular activities. The sequence is that of Guanosine-5'-triphosphate,3'-diphosphate pyrophosphatase from Erwinia tasmaniensis (strain DSM 17950 / CFBP 7177 / CIP 109463 / NCPPB 4357 / Et1/99).